A 566-amino-acid polypeptide reads, in one-letter code: Beta,beta-carotene 15,15'-dioxygenase (566 aa).

Residues His-172, His-237, His-308, and His-514 each contribute to the Fe cation site. A disordered region spans residues 529-566; the sequence is TPAKTQEDENSDHPTGLTAPGLGHGENDFTAGHGGKSL.

The protein belongs to the carotenoid oxygenase family. Fe(2+) serves as cofactor.

Its subcellular location is the cytoplasm. The protein localises to the cytosol. It catalyses the reaction all-trans-beta-carotene + O2 = 2 all-trans-retinal. It participates in cofactor metabolism; retinol metabolism. Functionally, symmetrically cleaves beta-carotene into two molecules of retinal using a dioxygenase mechanism. This chain is Beta,beta-carotene 15,15'-dioxygenase, found in Rattus norvegicus (Rat).